Here is a 584-residue protein sequence, read N- to C-terminus: Beta-(1--&gt;2)glucan export ATP-binding/permease protein NdvA (584 aa).

The region spanning 21 to 301 is the ABC transmembrane type-1 domain; it reads VSLVVAANII…MRQFSTQIFE (281 aa). The next 6 membrane-spanning stretches (helical) occupy residues 29–49, 57–77, 136–156, 158–178, 248–268, and 272–292; these read IILAVITIAEPILFGWIIDAI, DILFLWGGFGIFNTIAFVLVA, THLATAVALVLLVPTAFSMDV, LTLVLIVLGLIYVAIGKMVMD, IASTASMLIILIIGTMLVQSG, and VGDVIAFIGFANLLIARLDQM. Residues 335-569 form the ABC transporter domain; the sequence is VEFRHVSFDF…GGRFAALLHT (235 aa). 368 to 375 lines the ATP pocket; sequence GPTGAGKT.

The protein belongs to the ABC transporter superfamily. Beta-(1--&gt;2)glucan exporter (TC 3.A.1.108.1) family. Homodimer.

The protein resides in the cell inner membrane. It catalyses the reaction [(1-&gt;2)-beta-D-glucosyl](n)(in) + ATP + H2O = [(1-&gt;2)-beta-D-glucosyl](n)(out) + ADP + phosphate + H(+). Involved in beta-(1--&gt;2)glucan export. Transmembrane domains (TMD) form a pore in the inner membrane and the ATP-binding domain (NBD) is responsible for energy generation. This is Beta-(1--&gt;2)glucan export ATP-binding/permease protein NdvA from Agrobacterium vitis (Rhizobium vitis).